Consider the following 223-residue polypeptide: Large ribosomal subunit protein bL25 (223 aa).

This sequence belongs to the bacterial ribosomal protein bL25 family. CTC subfamily. In terms of assembly, part of the 50S ribosomal subunit; part of the 5S rRNA/L5/L18/L25 subcomplex. Contacts the 5S rRNA. Binds to the 5S rRNA independently of L5 and L18.

Functionally, this is one of the proteins that binds to the 5S RNA in the ribosome where it forms part of the central protuberance. The sequence is that of Large ribosomal subunit protein bL25 from Albidiferax ferrireducens (strain ATCC BAA-621 / DSM 15236 / T118) (Rhodoferax ferrireducens).